The chain runs to 818 residues: Glycerol-3-phosphate acyltransferase (818 aa).

The HXXXXD motif motif lies at 305 to 310; sequence CHRSHM.

Belongs to the GPAT/DAPAT family.

It is found in the cell inner membrane. It carries out the reaction sn-glycerol 3-phosphate + an acyl-CoA = a 1-acyl-sn-glycero-3-phosphate + CoA. It participates in phospholipid metabolism; CDP-diacylglycerol biosynthesis; CDP-diacylglycerol from sn-glycerol 3-phosphate: step 1/3. The polypeptide is Glycerol-3-phosphate acyltransferase (Edwardsiella ictaluri (strain 93-146)).